We begin with the raw amino-acid sequence, 460 residues long: ATP synthase subunit beta (460 aa).

Residue Gly150 to Thr157 coordinates ATP.

The protein belongs to the ATPase alpha/beta chains family. F-type ATPases have 2 components, CF(1) - the catalytic core - and CF(0) - the membrane proton channel. CF(1) has five subunits: alpha(3), beta(3), gamma(1), delta(1), epsilon(1). CF(0) has three main subunits: a(1), b(2) and c(9-12). The alpha and beta chains form an alternating ring which encloses part of the gamma chain. CF(1) is attached to CF(0) by a central stalk formed by the gamma and epsilon chains, while a peripheral stalk is formed by the delta and b chains.

The protein localises to the cell inner membrane. It catalyses the reaction ATP + H2O + 4 H(+)(in) = ADP + phosphate + 5 H(+)(out). Produces ATP from ADP in the presence of a proton gradient across the membrane. The catalytic sites are hosted primarily by the beta subunits. This chain is ATP synthase subunit beta, found in Shigella dysenteriae serotype 1 (strain Sd197).